A 1296-amino-acid chain; its full sequence is MLDVNVFDELRIGLATADDVRAWSHGEVKKPETINYRTLKPEKDGLFCEKIFGPTRDWECYCGKYKRVRFKGIICERCGVEVTRSKVRRERMGHIELAAPVTHIWYFKGVPSRLGYLLDLAPKDLEKVIYFAAYMITEVDDERRHTDLPSLQNEIDLERGEVAKRRDLDIEARAQRLEADLAELEAEGAKADARRKVRDSAEREMAQIRKRSDAELDRLERVWDRFKNLKVADLEGDELLYRELEQRYGSYFTGSMGAAAIQKRLETFDLDAEAEALRETIRSGKGQRKTRALKRLKVVNAFMTTTNSPLGMVLDCIPVIPPDLRPMVQLDGGRFATSDLNDLYRRVINRNNRLKRLLDLGAPEIIVNNEKRMLQEAVDALFDNGRRGRPVTGPGNRPLKSISDMLKGKQGRFRQNLLGKRVDYSGRSVIVVGPQLKLHQCGLPKQMALELFKPFVMKRLVDLNHAQNIKSAKRMVERARSVVWDVLEEVITEHPVLLNRAPTLHRLGIQAFEPQLVEGKAIHLHPLVCAAFNADFDGDQMAVHLPLSAEAQAEARILMLSSNNILKPSDGRPVTMPSQDMIIGLYHLTSDKDEALGAGRSFSSIAEAIMAFDAGGLDLNAVVKIRFTDLVPPTGFEAPEGWTEGESLLFETTLGRALFNEALPVDYPFVNGVVGKGELSVIVNDLAERYPKVEVAASLDALKEAGFSWATRSGVTIAISDVVTPSRKKEIVESYEKKAAKVQGQYEKGLITDEERRTELIDIWTQATNDVDAAMRENFPERNTVNRMVGSGARGNWMQVRQIAGMRGLVANPKGEIIPRPILSNYREGLSVVEYFIATHGARKGLADTALRTADSGYLTRRLVDVSQDVIIREEDCGTDRGLVTTIAEVGPDGVRRRSETVETGAYARTLATTVTSEDGTVLAEGGDDVGDVLISRLVEAGVDTIKVRSVLTCASRVGTCAKCYGRSLATGKLVDVGEAVGIIAAQSIGEPGTQLTMRTFHTGGVASADDITQGLPRVQELFEARTPKGEAPISEVAGRIAIDETDRTRRIVVTPDDGAEEIVYPITKRSRLLVNDGDHVAVGQQLIAGAVDPKKVLRILGPRAVQKHLVDEVQEVYRSQGVDIHDKHIEVIVRQMLRRVTVLDSGEANLLPGELAERGRFEDENRRVVSEGGTPASGRPELMGITKASLATDSWLSAASFQETTKVLTEAALSGRSDSLLGLKENVILGKLIPAGTGLPRYRNVRVEPTEEAKAELYPSFGYDEIDYLPLGTGSGEAIALEELDLGRGYEADYR.

Residues C60, C62, C75, and C78 each contribute to the Zn(2+) site. Mg(2+) contacts are provided by D535, D537, and D539. Zn(2+) contacts are provided by C877, C954, C961, and C964.

The protein belongs to the RNA polymerase beta' chain family. As to quaternary structure, the RNAP catalytic core consists of 2 alpha, 1 beta, 1 beta' and 1 omega subunit. When a sigma factor is associated with the core the holoenzyme is formed, which can initiate transcription. Mg(2+) serves as cofactor. Requires Zn(2+) as cofactor.

The enzyme catalyses RNA(n) + a ribonucleoside 5'-triphosphate = RNA(n+1) + diphosphate. Its function is as follows. DNA-dependent RNA polymerase catalyzes the transcription of DNA into RNA using the four ribonucleoside triphosphates as substrates. This Beutenbergia cavernae (strain ATCC BAA-8 / DSM 12333 / CCUG 43141 / JCM 11478 / NBRC 16432 / NCIMB 13614 / HKI 0122) protein is DNA-directed RNA polymerase subunit beta'.